Consider the following 1674-residue polypeptide: Kinesin-like protein KIF14 (1674 aa).

The interval 1–391 (MSVHTSHSRH…TEPDSLKVEN (391 aa)) is required for PRC1-binding. 2 disordered regions span residues 132–158 (ETLNPVGGNPGSDSASQASRTEAKGVN) and 171–374 (KDSN…PEEN). Composition is skewed to polar residues over residues 142–151 (GSDSASQASR) and 202–214 (SRAPVGSQRQTEA). S257 is modified (phosphoserine). At T262 the chain carries Phosphothreonine. The span at 267–279 (VLEHRWTPRHDPP) shows a compositional bias: basic and acidic residues. Positions 302 to 311 (TFRSASSESR) are enriched in polar residues. The segment covering 317–329 (VPEHRWTPRHDLP) has biased composition (basic and acidic residues). Positions 391–772 (NSQVTVAVRV…AAQRSNRNID (382 aa)) are required for microtubule-binding with high affinity. A Kinesin motor domain is found at 393–736 (QVTVAVRVRP…LRYATQARLI (344 aa)). ATP is bound at residue 482–489 (GQTGSGKS). The stretch at 743–826 (NEDMNAKLIR…QETKELQKAG (84 aa)) forms a coiled coil. In terms of domain architecture, FHA spans 860–911 (TTVGKHTPSSSHDIQLSGVLIADDHCTIRNFGGTVSIVPAGEAKTYVNGTHI). The interval 936 to 1674 (PVEVQKGKKL…DCTPNRIQWV (739 aa)) is required for CIT-binding. The stretch at 961-1110 (EFAKNELLTA…VQMLQENRGN (150 aa)) forms a coiled coil. 2 positions are modified to phosphoserine: S973 and S1326. Positions 1618-1674 (GLSKPWESCSSNSKEEQCKSDRADCGKSGPRRACEPHGDATPAVSSGDCTPNRIQWV) are disordered. Basic and acidic residues predominate over residues 1630–1642 (SKEEQCKSDRADC). The segment covering 1660 to 1674 (AVSSGDCTPNRIQWV) has biased composition (polar residues).

This sequence belongs to the TRAFAC class myosin-kinesin ATPase superfamily. Kinesin family. Directly interacts with PRC1 within a complex also containing KIF4A, KIF20A and KIF23; targets to the central spindle. Directly interacts with CIT depending on the activation state of the kinase (stronger interaction with the kinase-dead form); targets to the midbody. Interacts with ARRB2; the interaction is detected in the nucleus upon OR1D2 stimulation. Interacts with AKT1; the interaction is detected in the plasma membrane upon INS stimulation and promotes AKT1 phosphorylation. Interacts with SVIL; at midbody during cytokinesis. Interacts with RADIL (via PDZ domain); recruits RADIL to the microtubule network restricting RADIL from interaction with activated RAP1A.

The protein localises to the nucleus. The protein resides in the cytoplasm. Its subcellular location is the cytoskeleton. It localises to the spindle. It is found in the midbody. Its function is as follows. Microtubule motor protein that binds to microtubules with high affinity through each tubulin heterodimer and has an ATPase activity. Plays a role in many processes like cell division, cytokinesis and also in cell proliferation and apoptosis. During cytokinesis, targets to central spindle and midbody through its interaction with PRC1 and CIT respectively. Regulates cell growth through regulation of cell cycle progression and cytokinesis. During cell cycle progression acts through SCF-dependent proteasomal ubiquitin-dependent protein catabolic process which controls CDKN1B degradation, resulting in positive regulation of cyclins, including CCNE1, CCND1 and CCNB1. During late neurogenesis, regulates the cerebellar and cerebral cortex development and olfactory bulb development through regulation of apoptosis, cell proliferation and cell division. Also is required for chromosome congression and alignment during mitotic cell cycle process. Regulates cell spreading, focal adhesion dynamics, and cell migration through its interaction with RADIL resulting in regulation of RAP1A-mediated inside-out integrin activation by tethering RADIL on microtubules. The chain is Kinesin-like protein KIF14 from Mus musculus (Mouse).